The following is a 640-amino-acid chain: Zinc finger and BTB domain-containing protein 22 (640 aa).

One can recognise a BTB domain in the interval C57–A121. 3 disordered regions span residues R191 to P244, P308 to D327, and C332 to G482. Positions S192–F210 are enriched in polar residues. S203 carries the phosphoserine modification. Residues P318–D327 are compositionally biased toward acidic residues. Residues S431–S442 show a composition bias toward low complexity. Gly residues predominate over residues G469–G482. A C2H2-type 1; atypical zinc finger spans residues F490–H511. 2 consecutive C2H2-type zinc fingers follow at residues F517–H539 and Y545–H571. The segment at H571–N640 is disordered. A compositionally biased stretch (gly residues) spans V574–T588.

The protein belongs to the krueppel C2H2-type zinc-finger protein family.

It localises to the nucleus. Its function is as follows. May be involved in transcriptional regulation. The chain is Zinc finger and BTB domain-containing protein 22 (ZBTB22) from Canis lupus familiaris (Dog).